Reading from the N-terminus, the 765-residue chain is Complement factor B (765 aa).

Residues 1–25 (MGSNRCPRLGLVPLILGLLSGGVSM) form the signal peptide. Sushi domains lie at 35–100 (SPCS…ECKA), 101–160 (IRCP…ICDD), and 163–220 (GYCP…SCQD). Cystine bridges form between Cys37–Cys76, Cys62–Cys98, Cys103–Cys145, Cys131–Cys158, Cys165–Cys205, and Cys191–Cys218. Residues Asn122 and Asn142 are each glycosylated (N-linked (GlcNAc...) asparagine). The region spanning 270 to 469 (NIYLVLDGSD…NLEDVFFQML (200 aa)) is the VWFA domain. The Mg(2+) site is built by Ser278 and Ser280. Asn285 carries an N-linked (GlcNAc...) asparagine glycan. Residue Thr353 coordinates Mg(2+). The N-linked (GlcNAc...) asparagine glycan is linked to Asn378. The 282-residue stretch at 477-758 (LCGMVWEHKD…VLPWLKEKLK (282 aa)) folds into the Peptidase S1 domain. 5 cysteine pairs are disulfide-bonded: Cys478–Cys596, Cys511–Cys527, Cys599–Cys615, Cys660–Cys686, and Cys699–Cys729. Residues His526 and Asp576 each act as charge relay system in the active site. Residue Ser703 is the Charge relay system of the active site.

Belongs to the peptidase S1 family. Monomer. Interacts with complement C3b; this interaction is dependent on the presence of Mg(2+). In terms of assembly, catalytic component of the C3 convertase of the alternative complement pathway, also named C3bBb, composed of complement factor B Bb and complement C3b. Catalytic component of the C5 convertase of the alternative complement pathway, also named C3bBb3b, composed of complement factor B Bb and additional molecules of complement C3b. Interacts to CFP; this interaction contributes to the stabilization of the active C3-convertase enzyme complex. The cofactor is Mg(2+). Requires Mn(2+) as cofactor. Post-translationally, cleaved by CFD following activation of the alternative complement system, generating Ba and Bb chains. Cleavage and activation takes place when CFB is already associated with complement C3b.

It is found in the secreted. The protein resides in the cell surface. The catalysed reaction is Cleavage of Arg-|-Ser bond in complement component C3 alpha-chain to yield C3a and C3b, and Arg-|-Xaa bond in complement component C5 alpha-chain to yield C5a and C5b.. Its function is as follows. Precursor of the catalytic component of the C3 and C5 convertase complexes of the alternative pathway of the complement system, a cascade of proteins that leads to phagocytosis and breakdown of pathogens and signaling that strengthens the adaptive immune system. The alternative complement pathway acts as an amplification loop that enhances other complement pathways (classical, lectin and GZMK) by promoting formation of additional C3 and C5 convertases. CFB is cleaved and activated by CFD to generate Ba and Bb chains; Bb chain constituting the catalytic component of the C3 and C5 convertases. Serine protease component of the complement C3 and C5 convertase complexes of the alternative complement pathway. Following cleavage and activation by factor D (CFD), forms the C3 convertase together with complement C3b. As part of the C3 convertase, cleaves and activates C3 into C3a anaphylatoxin and C3b opsonin, the next components of the complement pathways. When an additional complement C3b molecule binds to the C3 convertase, forms the C5 convertase, which cleaves and activates C5 into C5a anaphylatoxin and C5b component of the membrane attack complex. Functionally, involved in proliferation and differentiation of preactivated B-lymphocytes, rapid spreading of peripheral blood monocytes, stimulation of lymphocyte blastogenesis and lysis of erythrocytes. The polypeptide is Complement factor B (CFB) (Sus scrofa (Pig)).